Reading from the N-terminus, the 397-residue chain is Probable protein phosphatase 2C 74 (397 aa).

One can recognise a PPM-type phosphatase domain in the interval G133–L391. Mn(2+) is bound by residues D170, G171, D343, and D382.

This sequence belongs to the PP2C family. Mg(2+) is required as a cofactor. The cofactor is Mn(2+).

It carries out the reaction O-phospho-L-seryl-[protein] + H2O = L-seryl-[protein] + phosphate. The catalysed reaction is O-phospho-L-threonyl-[protein] + H2O = L-threonyl-[protein] + phosphate. This is Probable protein phosphatase 2C 74 from Oryza sativa subsp. japonica (Rice).